A 503-amino-acid chain; its full sequence is ESX-5 secretion system protein EccD5 (503 aa).

11 consecutive transmembrane segments (helical) span residues 137-157 (IVAVQVGASMVATGVVLATGV), 169-189 (LTTIYTAVIGVLVLAVAMLLL), 200-220 (VADIMLMSAIMPVTVAAAAAP), 224-244 (VGSPQAVLGFGVLTVAAALAL), 250-270 (RLGIYTTIVIIGALTMLAALA), 272-292 (MVAATSAVTLLSSLLLICVVA), 359-379 (FLSGLLTGLGVMVVVCMTSLC), 382-402 (HTGQRWLPLILAGFTSGFLLL), 413-433 (SITLAGTAVIIAAAVCVRYAL), 439-459 (LAVSIVAAILVLLPAAGMAAA), and 480-500 (YLCLMPIFPLALWLMNVYAAI).

The protein belongs to the EccD/Snm4 family. Part of the ESX-5 / type VII secretion system (T7SS), which is composed of cytosolic and membrane components. The ESX-5 membrane complex is composed of EccB5, EccC5, EccD5 and EccE5.

It localises to the cell inner membrane. Part of the ESX-5 specialized secretion system, which is responsible for the secretion of EsxN and a number of PE_PGRS and PPE proteins, including PPE41. The chain is ESX-5 secretion system protein EccD5 from Mycobacterium tuberculosis (strain CDC 1551 / Oshkosh).